The sequence spans 213 residues: Transcription antitermination protein NusB (213 aa).

This sequence belongs to the NusB family.

Involved in transcription antitermination. Required for transcription of ribosomal RNA (rRNA) genes. Binds specifically to the boxA antiterminator sequence of the ribosomal RNA (rrn) operons. The protein is Transcription antitermination protein NusB of Picosynechococcus sp. (strain ATCC 27264 / PCC 7002 / PR-6) (Agmenellum quadruplicatum).